A 355-amino-acid polypeptide reads, in one-letter code: S-adenosylmethionine:tRNA ribosyltransferase-isomerase (355 aa).

This sequence belongs to the QueA family. Monomer.

It is found in the cytoplasm. It catalyses the reaction 7-aminomethyl-7-carbaguanosine(34) in tRNA + S-adenosyl-L-methionine = epoxyqueuosine(34) in tRNA + adenine + L-methionine + 2 H(+). It functions in the pathway tRNA modification; tRNA-queuosine biosynthesis. In terms of biological role, transfers and isomerizes the ribose moiety from AdoMet to the 7-aminomethyl group of 7-deazaguanine (preQ1-tRNA) to give epoxyqueuosine (oQ-tRNA). The sequence is that of S-adenosylmethionine:tRNA ribosyltransferase-isomerase from Pectobacterium atrosepticum (strain SCRI 1043 / ATCC BAA-672) (Erwinia carotovora subsp. atroseptica).